We begin with the raw amino-acid sequence, 1755 residues long: MESQQLSQHSHISHGSACASVTSKEVHTNQDPLDVSASKTEECEKASTKANSQQTTTPASSAVPENPHHASPQPASVPPPQNGPYPQQCMMTQNQANPSGWSFYGHPSMIPYTPYQMSPMYFPPGPQSQFPQYPSSVGTPLSTPSPESGNTFTDSSSADSDMTSTKKYVRPPPMLTSPNDFPNWVKTYIKFLQNSNLGGIIPTVNGKPVRQITDDELTFLYNTFQIFAPSQFLPTWVKDILSVDYTDIMKILSKSIEKMQSDTQEANDIVTLANLQYNGSTPADAFETKVTNIIDRLNNNGIHINNKVACQLIMRGLSGEYKFLRYTRHRHLNMTVAELFLDIHAIYEEQQGSRNSKPNYRRNLSDEKNDSRSYTNTTKPKVIARNPQKTNNSKSKTARAHNVSTSNNSPSTDNDSISKSTTEPIQLNNKHDLHLGQELTESTVNHTNHSDDELPGHLLLDSGASRTLIRSAHHIHSASSNPDINVVDAQKRNIPINAIGDLQFHFQDNTKTSIKVLHTPNIAYDLLSLNELAAVDITACFTKNVLERSDGTVLAPIVQYGDFYWVSKRYLLPSNISVPTINNVHTSESTRKYPYPFIHRMLAHANAQTIRYSLKNNTITYFNESDVDWSSAIDYQCPDCLIGKSTKHRHIKGSRLKYQNSYEPFQYLHTDIFGPVHNLPKSAPSYFISFTDETTKFRWVYPLHDRREDSILDVFTTILAFIKNQFQASVLVIQMDRGSEYTNRTLHKFLEKNGITPCYTTTADSRAHGVAERLNRTLLDDCRTQLQCSGLPNHLWFSAIEFSTIVRNSLASPKSKKSASQHAGLAGLDISTLLPFGQPVIVNDHNPNSKIHPRGIPGYALHPSRNSYGYIIYLPSLKKTVDTTNYVILQGKESRLDQFNYDALTFDEDLNRLTASYHSFIASNEIQESNDLNIESDHDFQSDIELHPEQPRNVLSKAVSPTDSTPPSTHTEDSKPISEINLRAPREVDPNISESNILPSKKRSSTPQISNIESTGSGGMHKLNVPLLAPMSQSNTHESSHASKSKDFRHSDSYSNNETNHTNVPISSTGGTNNKTVPQISDQETEKRIIHRSPSIDASPPENNSSHNIVPIKTPTTVSEQNTEESIIADLPLPDPPPEPPTELSDSFKELPPINSRQTNSSLGGIGDSNAYTTINSKKRSLEDNETEIKVSRDTWNTKNMRSLEPPRSKKRIHLIAAAKAVKSIKPIRTTLRYDEAITYNKDIKEKEKYIEAYHKEVNQLLKMNTWDTDKYYDRKEIDPKRVINSMFIFNKKRDGTHKARFVARGDIQHPDTYDTGMQSNTVHHYALMTSLSLALDNNYYITQLDISSAYLYADIKEELYIRPPPHLGMNDKLIRLKKSHYGLKQSGANWYETIKSYLIKQCGMEEVRGWSCVFKNSQVTICLFVDDMILFSKDLNANKKIITTLKKQYDTKIINLGESDNEIQYDILGLEIKYQRGKYMKLGMENSLTEKIPKLNVPLNPKGRKLSAPGQPGLYIDQDELEIDEDEYKEKVHEMQKLIGLASYVGYKFRFDLLYYINTLAQHILFPSRQVLDMTYELIQFMWDTRDKQLIWHKNKPTEPDNKLVAISDASYGNQPYYKSQIGNIFLLNGKVIGGKSTKASLTCTSTTEAEIHAVSEAIPLLNNLSHLVQELNKKPIIKGLLTDSRSTISIIKSTNEEKFRNRFFGTKAMRLRDEVSGNNLYVYYIETKKNIADVMTKPLPIKTFKLLTNKWIH.

The segment covering 1–16 (MESQQLSQHSHISHGS) has biased composition (low complexity). Disordered stretches follow at residues 1-93 (MESQ…MMTQ), 126-173 (PQSQ…RPPP), and 352-421 (GSRN…SKST). 2 stretches are compositionally biased toward polar residues: residues 48-60 (TKAN…TPAS) and 127-152 (QSQF…GNTF). Low complexity predominate over residues 153–165 (TDSSSADSDMTST). The RNA-binding stretch occupies residues 299-401 (NNGIHINNKV…NSKSKTARAH (103 aa)). The span at 402–418 (NVSTSNNSPSTDNDSIS) shows a compositional bias: low complexity. Residue Ser416 is modified to Phosphoserine. The active-site For protease activity; shared with dimeric partner is the Asp461. Residues 583–640 (NVHTSESTRKYPYPFIHRMLAHANAQTIRYSLKNNTITYFNESDVDWSSAIDYQCPDC) are integrase-type zinc finger-like. The Integrase catalytic domain occupies 660 to 829 (NSYEPFQYLH…SQHAGLAGLD (170 aa)). Positions 671 and 736 each coordinate Mg(2+). Disordered regions lie at residues 956-1087 (SKAV…ETEK), 1092-1111 (RSPS…NIVP), and 1129-1172 (ADLP…SNAY). Over residues 960–969 (SPTDSTPPST) the composition is skewed to low complexity. Over residues 1005–1015 (STPQISNIEST) the composition is skewed to polar residues. A compositionally biased stretch (basic and acidic residues) spans 1038-1052 (ESSHASKSKDFRHSD). Composition is skewed to polar residues over residues 1053–1082 (SYSN…QISD) and 1101–1111 (PENNSSHNIVP). The short motif at 1178–1212 (KKRSLEDNETEIKVSRDTWNTKNMRSLEPPRSKKR) is the Bipartite nuclear localization signal element. The 139-residue stretch at 1338-1476 (NNYYITQLDI…DILGLEIKYQ (139 aa)) folds into the Reverse transcriptase Ty1/copia-type domain. Mg(2+)-binding residues include Asp1346, Asp1427, Asp1428, Asp1610, Glu1652, and Asp1685. The RNase H Ty1/copia-type domain occupies 1610–1752 (DASYGNQPYY…IKTFKLLTNK (143 aa)).

As to quaternary structure, the capsid protein forms a homotrimer, from which the VLPs are assembled. The protease is a homodimer, whose active site consists of two apposed aspartic acid residues. In terms of processing, initially, virus-like particles (VLPs) are composed of the structural unprocessed proteins Gag and Gag-Pol, and also contain the host initiator methionine tRNA (tRNA(i)-Met) which serves as a primer for minus-strand DNA synthesis, and a dimer of genomic Ty RNA. Processing of the polyproteins occurs within the particle and proceeds by an ordered pathway, called maturation. First, the protease (PR) is released by autocatalytic cleavage of the Gag-Pol polyprotein yielding capsid protein p45 and a Pol-p154 precursor protein. This cleavage is a prerequisite for subsequent processing of Pol-p154 at the remaining sites to release the mature structural and catalytic proteins. Maturation takes place prior to the RT reaction and is required to produce transposition-competent VLPs.

Its subcellular location is the cytoplasm. It localises to the nucleus. It catalyses the reaction DNA(n) + a 2'-deoxyribonucleoside 5'-triphosphate = DNA(n+1) + diphosphate. It carries out the reaction Endonucleolytic cleavage to 5'-phosphomonoester.. Functionally, capsid protein (CA) is the structural component of the virus-like particle (VLP), forming the shell that encapsulates the retrotransposons dimeric RNA genome. The particles are assembled from trimer-clustered units and there are holes in the capsid shells that allow for the diffusion of macromolecules. CA also has nucleocapsid-like chaperone activity, promoting primer tRNA(i)-Met annealing to the multipartite primer-binding site (PBS), dimerization of Ty1 RNA and initiation of reverse transcription. In terms of biological role, the aspartyl protease (PR) mediates the proteolytic cleavages of the Gag and Gag-Pol polyproteins after assembly of the VLP. Its function is as follows. Reverse transcriptase/ribonuclease H (RT) is a multifunctional enzyme that catalyzes the conversion of the retro-elements RNA genome into dsDNA within the VLP. The enzyme displays a DNA polymerase activity that can copy either DNA or RNA templates, and a ribonuclease H (RNase H) activity that cleaves the RNA strand of RNA-DNA heteroduplexes during plus-strand synthesis and hydrolyzes RNA primers. The conversion leads to a linear dsDNA copy of the retrotransposon that includes long terminal repeats (LTRs) at both ends. Integrase (IN) targets the VLP to the nucleus, where a subparticle preintegration complex (PIC) containing at least integrase and the newly synthesized dsDNA copy of the retrotransposon must transit the nuclear membrane. Once in the nucleus, integrase performs the integration of the dsDNA into the host genome. This Saccharomyces cerevisiae (strain ATCC 204508 / S288c) (Baker's yeast) protein is Transposon Ty1-LR3 Gag-Pol polyprotein (TY1B-LR3).